Consider the following 385-residue polypeptide: uncharacterized protein (385 aa).

8 helical membrane passes run 17–37, 72–92, 107–127, 155–175, 191–211, 295–315, 326–346, and 354–374; these read ILIILFVGFLFLISLIGFIFT, TELMVFILFNIMVLIESWFLL, WILKLVYITVYVVFVVIKCIT, ICLIVSLVIHCIGLFVGFYII, WIQAVKILFIVLISYTILVLL, AFPSGHIGATLIVGCTFFYFL, ITLLALYFLHLVSMSFAIVVN, and ITFTYLWLLPLIFLTHFFNSF.

The protein localises to the membrane. This is an uncharacterized protein from Mycoplasma capricolum subsp. capricolum (strain California kid / ATCC 27343 / NCTC 10154).